The chain runs to 213 residues: Viral dihydrofolate reductase (213 aa).

In terms of domain architecture, DHFR spans 4 to 184 (LLNCIVAVDQ…IKYKFEVYEK (181 aa)). NADP(+)-binding positions include Ala10 and 16-22 (GIGKKGH). 31–36 (DFKYFQ) serves as a coordination point for substrate. 54-56 (KNT) is a binding site for NADP(+). Arg70 serves as a coordination point for substrate. NADP(+) is bound by residues 76–78 (SKK) and 116–123 (GGSSVYKD).

The protein belongs to the dihydrofolate reductase family.

It catalyses the reaction (6S)-5,6,7,8-tetrahydrofolate + NADP(+) = 7,8-dihydrofolate + NADPH + H(+). The protein operates within cofactor biosynthesis; tetrahydrofolate biosynthesis; 5,6,7,8-tetrahydrofolate from 7,8-dihydrofolate: step 1/1. Key enzyme in folate metabolism. Catalyzes an essential reaction for de novo glycine and purine synthesis, and for DNA precursor synthesis. This is Viral dihydrofolate reductase (DHFR) from Saimiri sciureus (Common squirrel monkey).